The chain runs to 223 residues: MNSNVENLPPHIIRLVYKEVTTLTADPPDGIKVFPNEEDLTDLQVTIEGPEGTPYAGGLFRMKLLLGKDFPASPPKGYFLTKIFHPNVGPNGEICVNVLKRDWTAELGIRHVLLTIKCLLIHPNPESALNEEAGRLLLENYEEYAARARLLTEIHGGACSTSSGRAEATQDLASGASASSADPMIPGVLGGAEGPMAKKHAGERDKKLAAKKKLDKKRALRRL.

In terms of domain architecture, UBC core spans 11-157 (HIIRLVYKEV…ARLLTEIHGG (147 aa)). C95 serves as the catalytic Glycyl thioester intermediate. The interval 170–223 (QDLASGASASSADPMIPGVLGGAEGPMAKKHAGERDKKLAAKKKLDKKRALRRL) is disordered. Positions 209 to 223 (AAKKKLDKKRALRRL) are enriched in basic residues.

It belongs to the ubiquitin-conjugating enzyme family.

The enzyme catalyses S-ubiquitinyl-[E1 ubiquitin-activating enzyme]-L-cysteine + [E2 ubiquitin-conjugating enzyme]-L-cysteine = [E1 ubiquitin-activating enzyme]-L-cysteine + S-ubiquitinyl-[E2 ubiquitin-conjugating enzyme]-L-cysteine.. The protein operates within protein modification; protein ubiquitination. Its function is as follows. Catalyzes the covalent attachment of ubiquitin to other proteins. Acts as an essential factor of the anaphase promoting complex/cyclosome (APC/C), a cell cycle-regulated ubiquitin ligase that controls progression through mitosis. Acts by specifically elongating 'Lys-11'-linked polyubiquitin chains initiated by the E2 enzyme ube2c/ubch10 on APC/C substrates, enhancing the degradation of APC/C substrates by the proteasome and promoting mitotic exit. The protein is Ubiquitin-conjugating enzyme E2 S-A (ube2s-a) of Xenopus laevis (African clawed frog).